Consider the following 337-residue polypeptide: MRVLGIETSCDETGIAIYDDKKGLLANQLYSQVKLHADYGGVVPELASRDHVRKTVPLIQAALKEAGLTASDIDAVAYTAGPGLVGALLVGATVGRSLAFAWNVPAIPVHHMEGHLLAPMLEDNPPEFPFVALLVSGGHTQLISVTGIGQYELLGESIDDAAGEAFDKTAKLLGLDYPGGPMLSKMASQGTAGRFVFPRPMTDRPGLDFSFSGLKTFAANTIRSNGDDEQTRADIARAFEDAVVDTLMIKCKRALESTGFKRLVMAGGVSANRTLRAKLAEMMQKRRGEVFYARPEFCTDNGAMIAYAGMVRFKAGVTADLGVTVRPRWPLAELPAA.

2 residues coordinate Fe cation: H111 and H115. Residues 134–138 (LVSGG), D167, G180, and N272 contribute to the substrate site. D300 is a binding site for Fe cation.

The protein belongs to the KAE1 / TsaD family. Fe(2+) serves as cofactor.

The protein resides in the cytoplasm. The catalysed reaction is L-threonylcarbamoyladenylate + adenosine(37) in tRNA = N(6)-L-threonylcarbamoyladenosine(37) in tRNA + AMP + H(+). Its function is as follows. Required for the formation of a threonylcarbamoyl group on adenosine at position 37 (t(6)A37) in tRNAs that read codons beginning with adenine. Is involved in the transfer of the threonylcarbamoyl moiety of threonylcarbamoyl-AMP (TC-AMP) to the N6 group of A37, together with TsaE and TsaB. TsaD likely plays a direct catalytic role in this reaction. The chain is tRNA N6-adenosine threonylcarbamoyltransferase from Salmonella newport (strain SL254).